The primary structure comprises 133 residues: Small ribosomal subunit protein bS6 (133 aa).

A disordered region spans residues 93-133 (KTAVTEPSPMMKEEPRRERRDDSAPRQERAEKKTETTEDNA). Residues 103–133 (MKEEPRRERRDDSAPRQERAEKKTETTEDNA) are compositionally biased toward basic and acidic residues.

Belongs to the bacterial ribosomal protein bS6 family.

Its function is as follows. Binds together with bS18 to 16S ribosomal RNA. The protein is Small ribosomal subunit protein bS6 of Alteromonas mediterranea (strain DSM 17117 / CIP 110805 / LMG 28347 / Deep ecotype).